The following is a 245-amino-acid chain: 1-(5-phosphoribosyl)-5-[(5-phosphoribosylamino)methylideneamino] imidazole-4-carboxamide isomerase (245 aa).

The active-site Proton acceptor is Asp7. Asp129 acts as the Proton donor in catalysis.

It belongs to the HisA/HisF family.

The protein resides in the cytoplasm. The enzyme catalyses 1-(5-phospho-beta-D-ribosyl)-5-[(5-phospho-beta-D-ribosylamino)methylideneamino]imidazole-4-carboxamide = 5-[(5-phospho-1-deoxy-D-ribulos-1-ylimino)methylamino]-1-(5-phospho-beta-D-ribosyl)imidazole-4-carboxamide. It participates in amino-acid biosynthesis; L-histidine biosynthesis; L-histidine from 5-phospho-alpha-D-ribose 1-diphosphate: step 4/9. This Shewanella baltica (strain OS223) protein is 1-(5-phosphoribosyl)-5-[(5-phosphoribosylamino)methylideneamino] imidazole-4-carboxamide isomerase.